The following is a 152-amino-acid chain: Superoxide dismutase [Cu-Zn] 1 (152 aa).

His45, His47, and His62 together coordinate Cu cation. Cys56 and Cys145 are disulfide-bonded. Positions 62, 70, 79, and 82 each coordinate Zn(2+). A Cu cation-binding site is contributed by His119.

This sequence belongs to the Cu-Zn superoxide dismutase family. As to quaternary structure, homodimer. The cofactor is Cu cation. Zn(2+) serves as cofactor.

Its subcellular location is the cytoplasm. It carries out the reaction 2 superoxide + 2 H(+) = H2O2 + O2. Destroys radicals which are normally produced within the cells and which are toxic to biological systems. This is Superoxide dismutase [Cu-Zn] 1 (SODCC.1) from Mesembryanthemum crystallinum (Common ice plant).